Consider the following 122-residue polypeptide: MIQQESRLRVADNTGAREILCIRVLGGSTRRFAGIGDVIVATVKEATPGGNVKAGEVVKAVIVRAKKETRRPDGSYIKFDENAAVLIKNDNEPRGTRIFGPVARELRDKKFMKIVSLAPEVI.

Belongs to the universal ribosomal protein uL14 family. As to quaternary structure, part of the 50S ribosomal subunit. Forms a cluster with proteins L3 and L19. In the 70S ribosome, L14 and L19 interact and together make contacts with the 16S rRNA in bridges B5 and B8.

Functionally, binds to 23S rRNA. Forms part of two intersubunit bridges in the 70S ribosome. The chain is Large ribosomal subunit protein uL14 from Corynebacterium diphtheriae (strain ATCC 700971 / NCTC 13129 / Biotype gravis).